A 69-amino-acid polypeptide reads, in one-letter code: Large ribosomal subunit protein bL28 (69 aa).

This sequence belongs to the bacterial ribosomal protein bL28 family.

The chain is Large ribosomal subunit protein bL28 from Nitratidesulfovibrio vulgaris (strain ATCC 29579 / DSM 644 / CCUG 34227 / NCIMB 8303 / VKM B-1760 / Hildenborough) (Desulfovibrio vulgaris).